We begin with the raw amino-acid sequence, 400 residues long: 3-phenylpropionate/cinnamic acid dioxygenase ferredoxin--NAD(+) reductase component (400 aa).

5 to 36 (TIIIVGGGQAAAMAAASLRQQGFTGELHLFSD) contributes to the FAD binding site. 146–174 (SVVIVGAGTIGLELAASATQRRCKVTVIE) contacts NAD(+).

Belongs to the bacterial ring-hydroxylating dioxygenase ferredoxin reductase family. In terms of assembly, this dioxygenase system consists of four proteins: the two subunits of the hydroxylase component (HcaE and HcaF), a ferredoxin (HcaC) and a ferredoxin reductase (HcaD). FAD is required as a cofactor.

The catalysed reaction is 2 reduced [2Fe-2S]-[ferredoxin] + NAD(+) + H(+) = 2 oxidized [2Fe-2S]-[ferredoxin] + NADH. The protein operates within aromatic compound metabolism; 3-phenylpropanoate degradation. In terms of biological role, part of the multicomponent 3-phenylpropionate dioxygenase, that converts 3-phenylpropionic acid (PP) and cinnamic acid (CI) into 3-phenylpropionate-dihydrodiol (PP-dihydrodiol) and cinnamic acid-dihydrodiol (CI-dihydrodiol), respectively. The chain is 3-phenylpropionate/cinnamic acid dioxygenase ferredoxin--NAD(+) reductase component from Shigella sonnei (strain Ss046).